Reading from the N-terminus, the 444-residue chain is Ribosomal protein uS12 methylthiotransferase RimO (444 aa).

In terms of domain architecture, MTTase N-terminal spans 4 to 118; it reads IKYGVVSLGC…LSDAIKKSIE (115 aa). Residues C13, C48, C81, C155, C159, and C162 each coordinate [4Fe-4S] cluster. Residues 141 to 373 form the Radical SAM core domain; sequence TTQKHYAYLR…MQRDIVKSIN (233 aa). Residues 374–440 form the TRAM domain; it reads ADKVNKVYKV…EYDLIGVVCD (67 aa).

Belongs to the methylthiotransferase family. RimO subfamily. [4Fe-4S] cluster serves as cofactor.

The protein resides in the cytoplasm. It catalyses the reaction L-aspartate(89)-[ribosomal protein uS12]-hydrogen + (sulfur carrier)-SH + AH2 + 2 S-adenosyl-L-methionine = 3-methylsulfanyl-L-aspartate(89)-[ribosomal protein uS12]-hydrogen + (sulfur carrier)-H + 5'-deoxyadenosine + L-methionine + A + S-adenosyl-L-homocysteine + 2 H(+). Catalyzes the methylthiolation of an aspartic acid residue of ribosomal protein uS12. The polypeptide is Ribosomal protein uS12 methylthiotransferase RimO (Clostridium tetani (strain Massachusetts / E88)).